The primary structure comprises 465 residues: Zinc finger and BTB domain-containing protein 32 (465 aa).

In terms of domain architecture, BTB spans C29–P87. Disordered regions lie at residues R111 to G179 and Q285 to I310. Basic and acidic residues-rich tracts occupy residues P123–E139 and E147–E176. 3 C2H2-type zinc fingers span residues Y350–H372, F378–H400, and Y405–H427.

The protein belongs to the krueppel C2H2-type zinc-finger protein family. Homodimer (via PTB domain). Interacts with the N-terminal of FANCC. Interacts with ZBTB16. Interacts with GATA3. As to expression, isoform 1 is testis-specific and is not expressed in lymphoid organs such as thymus or spleen. Isoform 2 is expressed in both B- and T-lymphoid cells.

The protein localises to the nucleus. Its function is as follows. DNA-binding protein that binds to the to a 5'-TGTACAGTGT-3' core sequence. May function as a transcriptional transactivator and transcriptional repressor. Probably exerts its repressor effect by preventing GATA3 from binding to DNA. May play a role in regulating the differentiation and activation of helper T-cells. The polypeptide is Zinc finger and BTB domain-containing protein 32 (Zbtb32) (Mus musculus (Mouse)).